The primary structure comprises 163 residues: Ribosome maturation factor RimM (163 aa).

Residues 90-155 form the PRC barrel domain; it reads VGEYYCKDLV…ADIDLNKKRL (66 aa).

The protein belongs to the RimM family. As to quaternary structure, binds ribosomal protein uS19.

It is found in the cytoplasm. Functionally, an accessory protein needed during the final step in the assembly of 30S ribosomal subunit, possibly for assembly of the head region. Essential for efficient processing of 16S rRNA. May be needed both before and after RbfA during the maturation of 16S rRNA. It has affinity for free ribosomal 30S subunits but not for 70S ribosomes. This chain is Ribosome maturation factor RimM, found in Neorickettsia sennetsu (strain ATCC VR-367 / Miyayama) (Ehrlichia sennetsu).